The chain runs to 303 residues: UDP-N-acetylenolpyruvoylglucosamine reductase (303 aa).

An FAD-binding PCMH-type domain is found at 30–196 (IGGPADLLII…LEAVFKLKQD (167 aa)). The active site involves Arg174. Ser225 acts as the Proton donor in catalysis. Glu295 is an active-site residue.

The protein belongs to the MurB family. Requires FAD as cofactor.

The protein localises to the cytoplasm. The enzyme catalyses UDP-N-acetyl-alpha-D-muramate + NADP(+) = UDP-N-acetyl-3-O-(1-carboxyvinyl)-alpha-D-glucosamine + NADPH + H(+). It participates in cell wall biogenesis; peptidoglycan biosynthesis. Its function is as follows. Cell wall formation. This Bacillus pumilus (strain SAFR-032) protein is UDP-N-acetylenolpyruvoylglucosamine reductase.